Here is a 689-residue protein sequence, read N- to C-terminus: MSYILVTGGAGYIGSHTVVELVNNGYNVVVVDNLVNSSYDVIVRIEVLTRKQIPFFKIDLNDHDALDQVFKLYPIQAVLHFAALKAVGESTKFPLNYYSNNVGGAISLLKVMEENNVKNIVFSSSATVYGDATRFENMIPIPEHCPTGPTNPYGETKITIENIIRDVYANDKSWKCAILRYFNPIGAHPSGLIGEDPLGIPNNLLPFLAQVAIGRREKLSVFGSDYNSKDGTPIRDYIHVIDLAKGHIAALNYLFNHKDNGLCREWNLGTGNGSTVFEVFNAFCEAVGKKLPFEVVGRRDGDVLNLTANPKRANTELKWKAQLSINDACKDLWNWTTKNPFGFQINNYSWTKFDSESLTNYDRLNTVRTFNGKFEVSISNHGATIVAAKLNGIKLNLGFDNLKGYLREDNPFFGATIGRVANRISKGDLLINGTHYQVGLNELHRTSLHGGTYGYNKRTFLGPIVKTNEKEKETTMEFVLIDLDGTEGYPGDVETKVIYTVRDTGVGGELGIEYEAKLLEESGRDSTAVSLTNHSYWNIGNQPSIEGTHIKLVSNKHLESNPLDSTPTGKIVTSTDLDSQNSAKLGPDGPVFDYCFVTKQQDKLDTRNDELRVVATATHPKTRIAFTTLTTEPAFQFYTGDGVDVAGVFTKRSGFCLEASRYIYNPKWFIPLNKGEVYGSYTIYRFENF.

The segment at Met1–Ile345 is galactowaldenase. Residue Tyr3 to Leu34 participates in NAD(+) binding. Residues Asn346 to Phe689 are mutarotase. The active-site For mutarotase activity is His534.

It in the N-terminal section; belongs to the NAD(P)-dependent epimerase/dehydratase family. This sequence in the C-terminal section; belongs to the aldose epimerase family. NAD(+) is required as a cofactor.

The enzyme catalyses UDP-alpha-D-glucose = UDP-alpha-D-galactose. It catalyses the reaction alpha-D-glucose = beta-D-glucose. The protein operates within carbohydrate metabolism; galactose metabolism. It participates in carbohydrate metabolism; hexose metabolism. In terms of biological role, mutarotase converts alpha-aldose to the beta-anomer. It is active on D-glucose, L-arabinose, D-xylose, D-galactose, maltose and lactose. The protein is Bifunctional protein GAL10 (GAL10) of Pachysolen tannophilus (Yeast).